The primary structure comprises 251 residues: Flap endonuclease Xni (251 aa).

Aspartate 104 provides a ligand contact to Mg(2+). A 5'-3' exonuclease domain is found at 160–249 (VQPQQLPDYW…IDGNLQQLRL (90 aa)). K(+) is bound by residues leucine 171, alanine 172, proline 180, valine 182, and isoleucine 185. The interaction with DNA stretch occupies residues 184–189 (GIGPKS).

It belongs to the Xni family. Mg(2+) serves as cofactor. K(+) is required as a cofactor.

In terms of biological role, has flap endonuclease activity. During DNA replication, flap endonucleases cleave the 5'-overhanging flap structure that is generated by displacement synthesis when DNA polymerase encounters the 5'-end of a downstream Okazaki fragment. The polypeptide is Flap endonuclease Xni (Escherichia coli O81 (strain ED1a)).